The chain runs to 303 residues: Nucleotide-binding protein USA300HOU_0794 (303 aa).

18–25 (GLSGAGKS) is an ATP binding site. GTP is bound at residue 69 to 72 (DLRG).

This sequence belongs to the RapZ-like family.

In terms of biological role, displays ATPase and GTPase activities. This Staphylococcus aureus (strain USA300 / TCH1516) protein is Nucleotide-binding protein USA300HOU_0794.